A 354-amino-acid polypeptide reads, in one-letter code: Inactive ADP-ribosyltransferase ARH2 (354 aa).

Ser-27 is subject to Phosphoserine.

The protein belongs to the ADP-ribosylglycohydrolase family.

The protein localises to the cytoplasm. It is found in the myofibril. The protein resides in the sarcomere. Its function is as follows. Required for myofibril assembly and outgrowth of the cardiac chambers in the developing heart. Appears to be catalytically inactive, showing no activity against O-acetyl-ADP-ribose. In Homo sapiens (Human), this protein is Inactive ADP-ribosyltransferase ARH2 (ADPRHL1).